Consider the following 705-residue polypeptide: Kinesin-like protein KIF2A (705 aa).

The globular stretch occupies residues 1-216 (MATANFGKIQ…LDYRPLTTAD (216 aa)). Positions 65 to 186 (DLVPDEDIEP…QELREKRAQD (122 aa)) are disordered. A Phosphoserine modification is found at Ser75. Thr96 carries the phosphothreonine modification. Position 101 is an N6-acetyllysine (Lys101). Polar residues predominate over residues 122 to 139 (LPEQSSSAQQNGSVSDIS). Phosphoserine is present on residues Ser134 and Ser139. The segment covering 158 to 186 (CVKEVEKLQEKREKRRLQQQELREKRAQD) has biased composition (basic and acidic residues). Residues 222–552 (RICVCVRKRP…LRYANRVKEL (331 aa)) enclose the Kinesin motor domain. 312–319 (GQTGSGKT) is a binding site for ATP. Thr528 and Tyr545 each carry phosphoserine. Residues 659–698 (ATQLEAILEQKIDILTELRDKVKSFRAALQEEEQASKQIN) adopt a coiled-coil conformation.

Belongs to the TRAFAC class myosin-kinesin ATPase superfamily. Kinesin family. MCAK/KIF2 subfamily. Interacts with AURKA and PLK1. Interacts with PSRC1. Interacts with MCRS1; the interaction enhances recruitment of KIF2A to the minus ends of spindle microtubules which promotes chromosome alignment. Highest level in lung. High level in ovary, moderate levels in heart, kidney, placenta, skeletal muscle and spleen (at protein level). Pancreas and spleen express a shorter isoform (at protein level). Expressed in the flagellum of elongated spermatids and sperm in the testis lumen (at protein level). Isoform 1 expressed in neuronal cells. Isoform 2 expressed in astrocytes and fibroblasts.

The protein resides in the cytoplasm. It is found in the cytoskeleton. It localises to the microtubule organizing center. The protein localises to the centrosome. Its subcellular location is the spindle pole. The protein resides in the spindle. It is found in the lysosome. Functionally, plus end-directed microtubule-dependent motor required for normal brain development. May regulate microtubule dynamics during axonal growth. Required for normal progression through mitosis. Required for normal congress of chromosomes at the metaphase plate. Required for normal spindle dynamics during mitosis. Promotes spindle turnover. Implicated in formation of bipolar mitotic spindles. Has microtubule depolymerization activity. This chain is Kinesin-like protein KIF2A (Kif2a), found in Mus musculus (Mouse).